Reading from the N-terminus, the 447-residue chain is MITLKEALKLSKDELENFKNDLKAKIEANPELNAYIDIYNIGDGVPIAIKDNIQVKDWSVTSGSNILQGYIAPYNATVIEKMLSAGLSPFGRTNMDEFAMGSTTESSFYGKTLNPHNKDCVPGGSSGGSAAAVGAGLAIAALGSDTGGSIRQPASFCGIVGMKPTYGRVSRYGLGAYASSLDQIGPMTQNVEDAAILYDIISGHDEKDSTSAHKNDKVSDKLNPNRKIRIAVLPKHIQNASEDVKKAYELAINALKKVGHEIVEAELMDAKFDISAYYITATAEATTNLARYDGIRYGNRVVGKDLNDTFVQTRSQGFGDEVKRRILLGNFVLSSGYYEAYYVKAQKTRHLIKDQYSKIFENVDLILSPVAPTTANKFGELSTPMEMYLSDLYTISVNLAGLPAISVPISKSSEGMPIGLQLIANAYDEQTLFDGALSLEREINYNA.

Catalysis depends on charge relay system residues Lys50 and Ser125. Catalysis depends on Ser149, which acts as the Acyl-ester intermediate.

This sequence belongs to the amidase family. GatA subfamily. As to quaternary structure, heterotrimer of A, B and C subunits.

It carries out the reaction L-glutamyl-tRNA(Gln) + L-glutamine + ATP + H2O = L-glutaminyl-tRNA(Gln) + L-glutamate + ADP + phosphate + H(+). Its function is as follows. Allows the formation of correctly charged Gln-tRNA(Gln) through the transamidation of misacylated Glu-tRNA(Gln) in organisms which lack glutaminyl-tRNA synthetase. The reaction takes place in the presence of glutamine and ATP through an activated gamma-phospho-Glu-tRNA(Gln). The protein is Glutamyl-tRNA(Gln) amidotransferase subunit A of Sulfurimonas denitrificans (strain ATCC 33889 / DSM 1251) (Thiomicrospira denitrificans (strain ATCC 33889 / DSM 1251)).